The sequence spans 66 residues: MSDEKYNAKLDQAGGKLKEGFGKISGDKSLETEGKVDKVTGKVKEVIVDAKDTVKGLAKGLDNKDK.

Belongs to the UPF0337 (CsbD) family.

The sequence is that of UPF0337 protein spyM18_1212 from Streptococcus pyogenes serotype M18 (strain MGAS8232).